Here is a 670-residue protein sequence, read N- to C-terminus: Transketolase, plasmid (670 aa).

His-32 contacts substrate. Thiamine diphosphate-binding positions include His-72 and 120-122 (GPL). Asp-161 contacts Mg(2+). Thiamine diphosphate-binding residues include Gly-162 and Asn-191. The Mg(2+) site is built by Asn-191 and Ile-193. His-267, Arg-364, and Ser-391 together coordinate substrate. His-267 contributes to the thiamine diphosphate binding site. Glu-417 functions as the Proton donor in the catalytic mechanism. Phe-443 is a thiamine diphosphate binding site. Residues His-467, Asp-475, and Arg-526 each coordinate substrate.

Belongs to the transketolase family. Homodimer. Requires Mg(2+) as cofactor. The cofactor is Ca(2+). Mn(2+) serves as cofactor. It depends on Co(2+) as a cofactor. Thiamine diphosphate is required as a cofactor.

It catalyses the reaction D-sedoheptulose 7-phosphate + D-glyceraldehyde 3-phosphate = aldehydo-D-ribose 5-phosphate + D-xylulose 5-phosphate. Its pathway is carbohydrate biosynthesis; Calvin cycle. In terms of biological role, catalyzes the transfer of a two-carbon ketol group from a ketose donor to an aldose acceptor, via a covalent intermediate with the cofactor thiamine pyrophosphate. This chain is Transketolase, plasmid (cbbTP), found in Cupriavidus necator (strain ATCC 17699 / DSM 428 / KCTC 22496 / NCIMB 10442 / H16 / Stanier 337) (Ralstonia eutropha).